We begin with the raw amino-acid sequence, 296 residues long: Protoheme IX farnesyltransferase (296 aa).

9 helical membrane-spanning segments follow: residues 11–31, 35–55, 84–104, 107–127, 132–152, 162–182, 208–228, 229–249, and 264–284; these read PGII…AAQG, YPLF…GCVF, VTLV…YVAA, LAMW…SLYM, VYGT…GYCA, LILL…IAIF, ITLY…GGYA, GYKY…MALS, and LFVF…VDSM.

It belongs to the UbiA prenyltransferase family. Protoheme IX farnesyltransferase subfamily.

It is found in the cell inner membrane. It catalyses the reaction heme b + (2E,6E)-farnesyl diphosphate + H2O = Fe(II)-heme o + diphosphate. The protein operates within porphyrin-containing compound metabolism; heme O biosynthesis; heme O from protoheme: step 1/1. In terms of biological role, converts heme B (protoheme IX) to heme O by substitution of the vinyl group on carbon 2 of heme B porphyrin ring with a hydroxyethyl farnesyl side group. The chain is Protoheme IX farnesyltransferase from Pectobacterium atrosepticum (strain SCRI 1043 / ATCC BAA-672) (Erwinia carotovora subsp. atroseptica).